Consider the following 479-residue polypeptide: Ribosomal RNA small subunit methyltransferase F (479 aa).

S-adenosyl-L-methionine-binding positions include 125–131, Glu149, Asp176, and Asp194; that span reads AAAPGSK. Catalysis depends on Cys247, which acts as the Nucleophile.

The protein belongs to the class I-like SAM-binding methyltransferase superfamily. RsmB/NOP family.

It localises to the cytoplasm. It carries out the reaction cytidine(1407) in 16S rRNA + S-adenosyl-L-methionine = 5-methylcytidine(1407) in 16S rRNA + S-adenosyl-L-homocysteine + H(+). Specifically methylates the cytosine at position 1407 (m5C1407) of 16S rRNA. This is Ribosomal RNA small subunit methyltransferase F from Shigella dysenteriae serotype 1 (strain Sd197).